The chain runs to 278 residues: Large ribosomal subunit protein uL2 (278 aa).

A compositionally biased stretch (basic residues) spans 210–219 (RKRWLGKRPQ). The interval 210–278 (RKRWLGKRPQ…LIIRHRKGSK (69 aa)) is disordered. Positions 258–270 (KTRDVKKASEKLI) are enriched in basic and acidic residues.

Belongs to the universal ribosomal protein uL2 family. As to quaternary structure, part of the 50S ribosomal subunit. Forms a bridge to the 30S subunit in the 70S ribosome.

One of the primary rRNA binding proteins. Required for association of the 30S and 50S subunits to form the 70S ribosome, for tRNA binding and peptide bond formation. It has been suggested to have peptidyltransferase activity; this is somewhat controversial. Makes several contacts with the 16S rRNA in the 70S ribosome. The chain is Large ribosomal subunit protein uL2 from Lactobacillus acidophilus (strain ATCC 700396 / NCK56 / N2 / NCFM).